Here is a 546-residue protein sequence, read N- to C-terminus: Inosine-5'-monophosphate dehydrogenase (546 aa).

CBS domains are found at residues 135–197 (FILD…VTAI) and 198–254 (MSTD…PLAS). NAD(+)-binding positions include 292-294 (DSS) and 342-344 (GMG). K(+) is bound by residues glycine 344 and glycine 346. Serine 347 is an IMP binding site. Cysteine 349 is a K(+) binding site. The active-site Thioimidate intermediate is the cysteine 349. Residues 382-384 (DGG), 405-406 (GG), and 430-434 (YRGMG) each bind IMP. Arginine 460 acts as the Proton acceptor in catalysis. IMP is bound at residue glutamine 472. Residues glutamate 531 and glycine 532 each coordinate K(+).

Belongs to the IMPDH/GMPR family. In terms of assembly, homotetramer. K(+) is required as a cofactor.

The protein resides in the cytoplasm. It catalyses the reaction IMP + NAD(+) + H2O = XMP + NADH + H(+). Its pathway is purine metabolism; XMP biosynthesis via de novo pathway; XMP from IMP: step 1/1. Mycophenolic acid (MPA) is a non-competitive inhibitor that prevents formation of the closed enzyme conformation by binding to the same site as the amobile flap. In contrast, mizoribine monophosphate (MZP) is a competitive inhibitor that induces the closed conformation. MPA is a potent inhibitor of mammalian IMPDHs but a poor inhibitor of the bacterial enzymes. MZP is a more potent inhibitor of bacterial IMPDH. Functionally, catalyzes the conversion of inosine 5'-phosphate (IMP) to xanthosine 5'-phosphate (XMP), the first committed and rate-limiting step in the de novo synthesis of guanine nucleotides, and therefore plays an important role in the regulation of cell growth. The chain is Inosine-5'-monophosphate dehydrogenase from Aspergillus fumigatus (strain ATCC MYA-4609 / CBS 101355 / FGSC A1100 / Af293) (Neosartorya fumigata).